The sequence spans 469 residues: Phenolic glucoside malonyltransferase 1 (469 aa).

N-acetylmethionine is present on M1. H169 serves as the catalytic Proton acceptor. Residues 169-173 (HAVLD) carry the HXXXD motif motif. Position 291–292 (291–292 (ST)) interacts with malonyl-CoA. The Proton acceptor role is filled by D413. The short motif at 413 to 417 (DFGWG) is the DFGWG motif element.

Belongs to the plant acyltransferase family. Phenolic glucoside malonyltransferase subfamily.

The catalysed reaction is a flavonol 3-O-beta-D-glucoside + malonyl-CoA = a flavonol 3-O-(6-O-malonyl-beta-D-glucoside) + CoA. The enzyme catalyses a flavonol 7-O-beta-D-glucoside + malonyl-CoA = a flavonol 7-O-(6-O-malonyl-beta-D-glucoside) + CoA. Functionally, malonyltransferase acting on xenobiotic glucosides. Has activity toward 2-Naphthol glucoside (2NAG), 1-Naphthol glucoside (1NAG), kaempferol 7-O-glucoside, kaempferol 3-O-glucoside, hydroxycoumarin glucosides, phenol-glucosides and isoflavone glucoside (daidzin), but not toward 4-coumaroyl glucoside, kaempferol 3,7-O-diglucoside, salicylic acid glucoside and phlorizin. In vivo, seems to be involved in the malonylation of 2-Naphthol glucoside while PMAT2 would be involved in the malonylation of 4-methylumbelliferone glucoside or 4-nitrophenyl glucoside. In Arabidopsis thaliana (Mouse-ear cress), this protein is Phenolic glucoside malonyltransferase 1 (PMAT1).